Reading from the N-terminus, the 224-residue chain is Ribonuclease T (224 aa).

Positions 1 to 11 are enriched in acidic residues; sequence MSEDLYEDDLD. Residues 1 to 22 form a disordered region; sequence MSEDLYEDDLDTQGSSGPRHPM. Residues 32–206 enclose the Exonuclease domain; it reads VVVDVETGGF…YDTEKTAELF (175 aa). Residues Asp35, Glu37, His193, and Asp198 each coordinate Mg(2+). His193 (proton donor/acceptor) is an active-site residue.

This sequence belongs to the RNase T family. Homodimer. Mg(2+) serves as cofactor.

Trims short 3' overhangs of a variety of RNA species, leaving a one or two nucleotide 3' overhang. Responsible for the end-turnover of tRNA: specifically removes the terminal AMP residue from uncharged tRNA (tRNA-C-C-A). Also appears to be involved in tRNA biosynthesis. This is Ribonuclease T from Pseudomonas putida (strain ATCC 700007 / DSM 6899 / JCM 31910 / BCRC 17059 / LMG 24140 / F1).